The sequence spans 232 residues: MFKKLCAEFLGTCWLVLGGCGSAVLASAFPQVGIGLLGVSFAFGLTVLTMAYTVGGISGGHFNPAVSLGLAVAGRVPAASLVSYVIAQVAGAIIAAAVLYVIATGKADFQLGSFAANGYGEHSPGGYSLTAALVTEVVMTFFFLIIILGSTHRRVPAGFAPIAIGLALTLIHLVSIPVTNTSVNPARSTGQALFVGGWALSQLWLFWIAPLFGAAIAGIVWKSVGEEFRPVD.

The next 2 helical transmembrane spans lie at 9–29 and 32–52; these read FLGT…ASAF and VGIG…TMAY. Residues 63-65 carry the NPA 1 motif; it reads NPA. The next 3 membrane-spanning stretches (helical) occupy residues 82–102, 129–149, and 158–178; these read VSYV…LYVI, LTAA…IILG, and GFAP…SIPV. The short motif at 184-186 is the NPA 2 element; it reads NPA. A helical membrane pass occupies residues 200–220; it reads LSQLWLFWIAPLFGAAIAGIV.

The protein belongs to the MIP/aquaporin (TC 1.A.8) family. Homotetramer.

It localises to the cell inner membrane. The enzyme catalyses H2O(in) = H2O(out). Channel that permits osmotically driven movement of water in both directions. It is involved in the osmoregulation and in the maintenance of cell turgor during volume expansion in rapidly growing cells. It mediates rapid entry or exit of water in response to abrupt changes in osmolarity. The sequence is that of Aquaporin Z 2 from Rhizobium meliloti (strain 1021) (Ensifer meliloti).